An 82-amino-acid polypeptide reads, in one-letter code: Immediate early response 3-interacting protein 1 (82 aa).

Transmembrane regions (helical) follow at residues 2–22 and 62–82; these read AFTL…IAVL and VMRV…LLFG.

This sequence belongs to the YOS1 family.

It is found in the endoplasmic reticulum membrane. Functionally, regulator of endoplasmic reticulum secretion that acts as a key determinant of brain size. Required for secretion of extracellular matrix proteins. Required for correct brain development by depositing sufficient extracellular matrix proteins for tissue integrity and the proliferation of neural progenitors. Acts as a regulator of the unfolded protein response (UPR). The polypeptide is Immediate early response 3-interacting protein 1 (Rattus norvegicus (Rat)).